The primary structure comprises 313 residues: Ribosomal RNA small subunit methyltransferase H (313 aa).

S-adenosyl-L-methionine contacts are provided by residues Gly35–His37, Asp55, Phe81, Asp103, and Gln110.

The protein belongs to the methyltransferase superfamily. RsmH family.

The protein localises to the cytoplasm. The enzyme catalyses cytidine(1402) in 16S rRNA + S-adenosyl-L-methionine = N(4)-methylcytidine(1402) in 16S rRNA + S-adenosyl-L-homocysteine + H(+). In terms of biological role, specifically methylates the N4 position of cytidine in position 1402 (C1402) of 16S rRNA. The polypeptide is Ribosomal RNA small subunit methyltransferase H (Azotobacter vinelandii (strain DJ / ATCC BAA-1303)).